Consider the following 220-residue polypeptide: Nicotinamidase (220 aa).

Asp-11 is a catalytic residue. Zn(2+)-binding residues include Asp-53, His-55, and His-94. The active site involves Lys-119. Cys-163 acts as the Nucleophile in catalysis.

It belongs to the isochorismatase family.

It is found in the cytoplasm. Its subcellular location is the nucleus. The protein localises to the peroxisome. The catalysed reaction is nicotinamide + H2O = nicotinate + NH4(+). It participates in cofactor biosynthesis; nicotinate biosynthesis; nicotinate from nicotinamide: step 1/1. Catalyzes the deamidation of nicotinamide, an early step in the NAD(+) salvage pathway. The chain is Nicotinamidase (pnc1) from Schizosaccharomyces pombe (strain 972 / ATCC 24843) (Fission yeast).